A 121-amino-acid polypeptide reads, in one-letter code: Glycine cleavage system H protein (121 aa).

The Lipoyl-binding domain occupies 16 to 98 (VATVGITAYA…ESGGWFAKIK (83 aa)). At Lys-57 the chain carries N6-lipoyllysine.

Belongs to the GcvH family. As to quaternary structure, the glycine cleavage system is composed of four proteins: P, T, L and H. The cofactor is (R)-lipoate.

The glycine cleavage system catalyzes the degradation of glycine. The H protein shuttles the methylamine group of glycine from the P protein to the T protein. This is Glycine cleavage system H protein from Caulobacter vibrioides (strain NA1000 / CB15N) (Caulobacter crescentus).